The sequence spans 122 residues: Large ribosomal subunit protein uL14 (122 aa).

It belongs to the universal ribosomal protein uL14 family. Part of the 50S ribosomal subunit. Forms a cluster with proteins L3 and L19. In the 70S ribosome, L14 and L19 interact and together make contacts with the 16S rRNA in bridges B5 and B8.

In terms of biological role, binds to 23S rRNA. Forms part of two intersubunit bridges in the 70S ribosome. The sequence is that of Large ribosomal subunit protein uL14 from Teredinibacter turnerae (strain ATCC 39867 / T7901).